Consider the following 525-residue polypeptide: MDKKQLEESVNNRRTFAIISHPDAGKTTITEQLLLFGGVVRKAGTVKAKKSGNFAKSDWMEIEKKRGISVTSSVMQFDYAGKRVNILDTPGHEDFSEDTYRTLMAVDSAVMVIDSAKGIEPQTKKLFQVCRMRGIPIFTFINKLDRDGREPLDLTAELEDVLGIESYAMNWPIGMGKGLKGLYDIYNHRIELYRSEDEGQAFLELDDNGEIKGDNPLKDESIYKQVLEEIELIEGAGSEFDEEKIAKGELTPVFFGSALTNFGVKTFLDAYLKYAPKPAAHKTEDGSEVEPDRKDFSGFIFKIQANMNPNHRDRIAFVRICSGEFDRGMDVFLERTGKKLRLSNSTQFMADTRETLETAVAGDIIGLYDTGNFQIGDSIYTGKKAVKFEKLPQFTPELFMRVTAKNVMKQKSFHKGIQQLVQEGAVQLYQSYSTGDYILGAVGQLQFEVFQFRMANEYNSEVVMTPMGHKIARWIDPEQLDEKMSSSRNLLVKDRAGMPLFLFENEFAERWFMDKYPDVKLTAKL.

In terms of domain architecture, tr-type G spans 11–279 (NNRRTFAIIS…AYLKYAPKPA (269 aa)). GTP-binding positions include 20–27 (SHPDAGKT), 88–92 (DTPGH), and 142–145 (NKLD).

The protein belongs to the TRAFAC class translation factor GTPase superfamily. Classic translation factor GTPase family. PrfC subfamily.

It localises to the cytoplasm. Increases the formation of ribosomal termination complexes and stimulates activities of RF-1 and RF-2. It binds guanine nucleotides and has strong preference for UGA stop codons. It may interact directly with the ribosome. The stimulation of RF-1 and RF-2 is significantly reduced by GTP and GDP, but not by GMP. This chain is Peptide chain release factor 3, found in Ligilactobacillus salivarius (strain UCC118) (Lactobacillus salivarius).